The primary structure comprises 359 residues: tRNA/tmRNA (uracil-C(5))-methyltransferase (359 aa).

S-adenosyl-L-methionine-binding residues include Q183, Y211, N216, E232, and D292. The active-site Nucleophile is C317. Catalysis depends on E351, which acts as the Proton acceptor.

Belongs to the class I-like SAM-binding methyltransferase superfamily. RNA M5U methyltransferase family. TrmA subfamily.

The enzyme catalyses uridine(54) in tRNA + S-adenosyl-L-methionine = 5-methyluridine(54) in tRNA + S-adenosyl-L-homocysteine + H(+). It carries out the reaction uridine(341) in tmRNA + S-adenosyl-L-methionine = 5-methyluridine(341) in tmRNA + S-adenosyl-L-homocysteine + H(+). Its function is as follows. Dual-specificity methyltransferase that catalyzes the formation of 5-methyluridine at position 54 (m5U54) in all tRNAs, and that of position 341 (m5U341) in tmRNA (transfer-mRNA). The polypeptide is tRNA/tmRNA (uracil-C(5))-methyltransferase (Pseudomonas fluorescens (strain Pf0-1)).